The following is a 279-amino-acid chain: Ribosomal RNA small subunit methyltransferase J (279 aa).

Residues 138–139 (ER) and Asp194 each bind S-adenosyl-L-methionine.

The protein belongs to the methyltransferase superfamily. RsmJ family.

The protein localises to the cytoplasm. The enzyme catalyses guanosine(1516) in 16S rRNA + S-adenosyl-L-methionine = N(2)-methylguanosine(1516) in 16S rRNA + S-adenosyl-L-homocysteine + H(+). Specifically methylates the guanosine in position 1516 of 16S rRNA. The polypeptide is Ribosomal RNA small subunit methyltransferase J (Acinetobacter baumannii (strain AYE)).